A 325-amino-acid chain; its full sequence is MSSGADVPSDAPAHCPGTQSDDAGKASACAGCPNQQLCATGPKGPDPAIALVRQKLADVRNKLLVLSGKGGVGKSTVTALLSRAMAHRNPDENFGVLDIDICGPSQPRVLGVLGEQVHQSGSGWSPVYIEDNLSLMSIGFLLGSPDDAIIWRGPKKNGMIRQFLTEVDWGQLDYLVLDTPPGTSDEHLSATTFLKGTDGSWGAVLVTTPQEVALLDVRKEISFCKKLAIPVVGVIENMSAFVCPKCTTETRIFPARTDGGGAEQMCIEMEVPYLGQLPLDPRLTKCCDEGKDFITEFPTSPAVVALEEIVTKVRQFFGDGKGERQ.

Residues 1-26 (MSSGADVPSDAPAHCPGTQSDDAGKA) are disordered. Residues cysteine 15, cysteine 29, cysteine 32, and cysteine 38 each contribute to the [4Fe-4S] cluster site. 68–75 (GKGGVGKS) is a binding site for ATP. [4Fe-4S] cluster-binding residues include cysteine 243 and cysteine 246.

It belongs to the Mrp/NBP35 ATP-binding proteins family. NUBP1/NBP35 subfamily. Heterotetramer of 2 Nubp1 and 2 Nubp2 chains. [4Fe-4S] cluster serves as cofactor.

The protein localises to the cytoplasm. In terms of biological role, component of the cytosolic iron-sulfur (Fe/S) protein assembly (CIA) machinery. Required for maturation of extramitochondrial Fe-S proteins. The Nubp1-Nubp2 heterotetramer forms a Fe-S scaffold complex, mediating the de novo assembly of an Fe-S cluster and its transfer to target apoproteins. This chain is Cytosolic Fe-S cluster assembly factor Nubp1 homolog, found in Anopheles gambiae (African malaria mosquito).